The sequence spans 1665 residues: MATDGASCEPNFSRAPEDVGATAEAAVATKEFDVDTLSKSELRMLLSVMEGELEARDLVIEALRARRKEVFIQERYGRFNLNDPFLALQRDYEAGAGEKEKKPVCTNPLSILEAVMAHCRKMQERMSTQLAAAESRQKKLEMEKLQLQALEQEHKKLATRLEEERGKNKHVVLMLVKECKQLSGKVIEEAQKLEEVMTKLEEEKKKTNELEEELSAEKRRSTEMEAQLEKQLSEFDIEREQLRAKLNREEAHTTDLKEEIDKMKKMIEQLKRGNDSKPSLSLPRKTKDRRLVSISVGTEGPVTRSVACQTDLVIESTDHVKKLPLTVPVKPSTGSPLVSAPAKGNVCPSVPLLRPGIDRQASHGDLIVSSVPAVPPPNANRIEENGPSIGSTPDLASSTPPLPSNAAPPTGQTSGIASQNYSQASSMHSLHSPCANASLHPGPNPRIQAARFRFQGNANDQDQNGNTTQSPPSRDVSPTSRDNLVAKQLARNTVTQALSRFTSPQASASPRPGAPPTGDIGTHPAVSRTSLKTPGLARVDRGNPPPIPPKKPGLSQAPSPPHPQLKAIMDSSRASNAGAKVDNKTVASPPASLPQGNRVINEENLPKSSSPQLPPKPSIDLTVAPAGCAVSALATSQVGARPAETPGPTQPACSDSSLVIPTTIAFRSSINPVSASASRPGASDSLLVTASGWSPSLTPLLMSGGPAPLAGRPTLLQQAAAQGNVTLLSMLLNEEGLDINYSCEDGHSALYSAAKNGHTDCVRLLLNAKAQIDAADKNGFTPLCAAAAQGHFECVELLIAYHANIDHAADGGQTPLYLACKNGNKECIKVLLEAGTDRSVKTRDGWTPVHAAVDTGNVDSLKLLMYHRAPTLGHSLNEEEPEPGAFDLDQGQEGSEGTAKPVVPTDLINHANREGWTAAHIAASKGFKNCLEILCRHGGLEPERKDKCNRTVHDVATDDCKHLLENLNALKIPLRISVGETQPGSYGCDDFECENTICALNIHKQTSWDDFSKAVSQALTNHFQAISSDGWWSLEDMTFNNTPEPSIGLSARSILSITLGNVPWSAGQCFTQAPWDFMRKNKAEQVTVLLSGPQEGCLNSVTYASMIPLQMLQNYLRLVEQYHNVIFHGPEGSLQDYIAHQLALCMKHRQMAAGFSCEIVRAEVDAGFSKEQLIDLFINSACLIPVKQSPVTKKIIIILENLEKSSLSELLGDFLAPLENRSTESPCTFQKGNGTSECYYFHENCFLMGTIAKTCLQGSDLLVQQHFRWVQLRWDGEPMHGLLQRFLRRKVVNKFRGQAPSPCDPVCKMVDWALAVWHQLNSCLARLGTPDALLGPKYFLSCPVVPGHAQVTVKWMSKLWNAIIAPKVQEAILSRASVKRQPGLRQTTAKKPPSQGQQAVVKAALSILLNKAVLHGCPLLRAELDQYITDFKGGSFPLSIVSSYNSCSKKKGENGAWRKVSTNPRKKSGRFSSPTWSKPDLGEEGTKNKTMSQPNCNRIASLSKQKSSENDPSSMLNLDQRLSLGSDDEADLVKELQSMCSSKSESDISKIADSRDDLRRFDSSENSPAFSAAINNLRMPVSQKEVSPVSSHQTTKRSTSTSKTELSVSRVKSFLPVPRSKVSQCSQNTKRSSSSSNTRQTELNNNSKEEIWNLCKNEQVQKPNK.

Residues 120-277 (RKMQERMSTQ…EQLKRGNDSK (158 aa)) adopt a coiled-coil conformation. 3 disordered regions span residues 203–222 (EKKKTNELEEELSAEKRRST), 368–480 (VSSV…SPTS), and 500–620 (RFTS…PSID). Polar residues-rich tracts occupy residues 388 to 399 (SIGSTPDLASST) and 410 to 429 (TGQTSGIASQNYSQASSMHS). Over residues 455–469 (QGNANDQDQNGNTTQ) the composition is skewed to low complexity. A compositionally biased stretch (polar residues) spans 470-480 (SPPSRDVSPTS). An Asymmetric dimethylarginine modification is found at arginine 500. 5 ANK repeats span residues 711–741 (GRPTLLQQAAAQGNVTLLSMLLNEEGLDINY), 745–774 (DGHSALYSAAKNGHTDCVRLLLNAKAQIDA), 778–807 (NGFTPLCAAAAQGHFECVELLIAYHANIDH), 811–840 (GGQTPLYLACKNGNKECIKVLLEAGTDRSV), and 844–873 (DGWTPVHAAVDTGNVDSLKLLMYHRAPTLG). A disordered region spans residues 875-902 (SLNEEEPEPGAFDLDQGQEGSEGTAKPV). Residues 914 to 944 (EGWTAAHIAASKGFKNCLEILCRHGGLEPER) form an ANK 6 repeat. The disordered stretch occupies residues 1447–1495 (CSKKKGENGAWRKVSTNPRKKSGRFSSPTWSKPDLGEEGTKNKTMSQPN). Phosphoserine is present on serine 1526. The interval 1575–1665 (NNLRMPVSQK…KNEQVQKPNK (91 aa)) is disordered. Composition is skewed to low complexity over residues 1590–1604 (SSHQTTKRSTSTSKT) and 1623–1641 (SQCSQNTKRSSSSSNTRQT). A compositionally biased stretch (polar residues) spans 1656–1665 (KNEQVQKPNK).

As to quaternary structure, interacts with CTTN/cortactin SH3 domain. Interacts with STRN, STRN4/zinedin and MOB4/phocein; this interactions mediate the association with the STRIPAK core complex and may regulate dendritic spine distribution of the STRIPAK complex in hippocampal neurons. Activation of glutamate receptors weakens the interaction with STRN and STRN4.

It localises to the cytoplasm. The protein resides in the cell cortex. It is found in the cell projection. Its subcellular location is the dendritic spine. In terms of biological role, regulates the dendritic spine distribution of CTTN/cortactin in hippocampal neurons, and thus controls dendritic spinogenesis and dendritic spine maintenance. Associates with the striatin-interacting phosphatase and kinase (STRIPAK) core complex to regulate dendritic spine distribution of the STRIPAK complex in hippocampal neurons. This chain is Cortactin-binding protein 2 (CTTNBP2), found in Dasypus novemcinctus (Nine-banded armadillo).